Reading from the N-terminus, the 283-residue chain is tRNA pseudouridine synthase B (283 aa).

Asp38 serves as the catalytic Nucleophile.

Belongs to the pseudouridine synthase TruB family. Type 1 subfamily.

The enzyme catalyses uridine(55) in tRNA = pseudouridine(55) in tRNA. Functionally, responsible for synthesis of pseudouridine from uracil-55 in the psi GC loop of transfer RNAs. This is tRNA pseudouridine synthase B from Aster yellows witches'-broom phytoplasma (strain AYWB).